We begin with the raw amino-acid sequence, 126 residues long: Antimicrobial protein 1 (126 aa).

The signal sequence occupies residues 1–24; sequence MRSSLLLGLTVVLLLGVTVPPCMA.

As to expression, strongly expressed in gills, hemocytes and reproductive tract, with weaker expression in muscle, heart and digestive tract. Not detected in eyes and hepatopancreas (at protein level).

It localises to the secreted. Has antibacterial activity against the Gram-positive bacteria E.coli (MIC&lt;50 ug/ml) and P.aeruginosa (MIC&lt;25 ug/ml), and the Gram-negative bacteria S.aureus (MIC&lt;100 ug/ml) and S.pyogenes (MIC&lt;50 ug/ml). This is Antimicrobial protein 1 from Scylla serrata (Mud crab).